A 121-amino-acid chain; its full sequence is Large ribosomal subunit protein uL18 (121 aa).

The protein belongs to the universal ribosomal protein uL18 family. In terms of assembly, part of the 50S ribosomal subunit; part of the 5S rRNA/L5/L18/L25 subcomplex. Contacts the 5S and 23S rRNAs.

Functionally, this is one of the proteins that bind and probably mediate the attachment of the 5S RNA into the large ribosomal subunit, where it forms part of the central protuberance. The polypeptide is Large ribosomal subunit protein uL18 (Ureaplasma urealyticum serovar 10 (strain ATCC 33699 / Western)).